The sequence spans 431 residues: Histidinol dehydrogenase (431 aa).

Tyr130, Gln191, and Asn214 together coordinate NAD(+). Residues Ser237, Gln259, and His262 each contribute to the substrate site. 2 residues coordinate Zn(2+): Gln259 and His262. Active-site proton acceptor residues include Glu327 and His328. Substrate contacts are provided by His328, Asp361, Glu415, and His420. Asp361 contributes to the Zn(2+) binding site. Residue His420 participates in Zn(2+) binding.

This sequence belongs to the histidinol dehydrogenase family. Requires Zn(2+) as cofactor.

The enzyme catalyses L-histidinol + 2 NAD(+) + H2O = L-histidine + 2 NADH + 3 H(+). It functions in the pathway amino-acid biosynthesis; L-histidine biosynthesis; L-histidine from 5-phospho-alpha-D-ribose 1-diphosphate: step 9/9. Functionally, catalyzes the sequential NAD-dependent oxidations of L-histidinol to L-histidinaldehyde and then to L-histidine. This is Histidinol dehydrogenase from Syntrophotalea carbinolica (strain DSM 2380 / NBRC 103641 / GraBd1) (Pelobacter carbinolicus).